Reading from the N-terminus, the 303-residue chain is ATP synthase gamma chain (303 aa).

This sequence belongs to the ATPase gamma chain family. As to quaternary structure, F-type ATPases have 2 components, CF(1) - the catalytic core - and CF(0) - the membrane proton channel. CF(1) has five subunits: alpha(3), beta(3), gamma(1), delta(1), epsilon(1). CF(0) has three main subunits: a, b and c.

It localises to the cell inner membrane. In terms of biological role, produces ATP from ADP in the presence of a proton gradient across the membrane. The gamma chain is believed to be important in regulating ATPase activity and the flow of protons through the CF(0) complex. This Elusimicrobium minutum (strain Pei191) protein is ATP synthase gamma chain.